A 238-amino-acid chain; its full sequence is Large ribosomal subunit protein uL2 (238 aa).

Residues 201 to 238 are disordered; sequence PFGGGGRQHPGRPKTVSRNTPPGRKVGSIAARRTGVGH.

This sequence belongs to the universal ribosomal protein uL2 family. As to quaternary structure, part of the 50S ribosomal subunit. Forms a bridge to the 30S subunit in the 70S ribosome.

In terms of biological role, one of the primary rRNA binding proteins. Required for association of the 30S and 50S subunits to form the 70S ribosome, for tRNA binding and peptide bond formation. It has been suggested to have peptidyltransferase activity; this is somewhat controversial. Makes several contacts with the 16S rRNA in the 70S ribosome. The sequence is that of Large ribosomal subunit protein uL2 from Methanocella arvoryzae (strain DSM 22066 / NBRC 105507 / MRE50).